We begin with the raw amino-acid sequence, 92 residues long: Small ribosomal subunit protein uS19 (92 aa).

It belongs to the universal ribosomal protein uS19 family.

Protein S19 forms a complex with S13 that binds strongly to the 16S ribosomal RNA. The chain is Small ribosomal subunit protein uS19 from Acidiphilium cryptum (strain JF-5).